We begin with the raw amino-acid sequence, 589 residues long: Aspartate--tRNA ligase (589 aa).

Glu175 is a binding site for L-aspartate. Residues 199 to 202 are aspartate; the sequence is QLFK. Position 221 (Arg221) interacts with L-aspartate. ATP-binding positions include 221–223 and Gln230; that span reads RDE. His449 lines the L-aspartate pocket. Residue Glu483 coordinates ATP. Residue Arg490 coordinates L-aspartate. An ATP-binding site is contributed by 535–538; sequence GLDR.

Belongs to the class-II aminoacyl-tRNA synthetase family. Type 1 subfamily. Homodimer.

It localises to the cytoplasm. The enzyme catalyses tRNA(Asp) + L-aspartate + ATP = L-aspartyl-tRNA(Asp) + AMP + diphosphate. Functionally, catalyzes the attachment of L-aspartate to tRNA(Asp) in a two-step reaction: L-aspartate is first activated by ATP to form Asp-AMP and then transferred to the acceptor end of tRNA(Asp). This is Aspartate--tRNA ligase from Lysinibacillus sphaericus (strain C3-41).